An 827-amino-acid polypeptide reads, in one-letter code: Beta-galactosidase 2 (827 aa).

An N-terminal signal peptide occupies residues 1–24 (MAASAVAVAFVVAVAAVLAAAASA). Residue E182 is the Proton donor of the active site. N-linked (GlcNAc...) asparagine glycosylation occurs at N209. E251 acts as the Nucleophile in catalysis. N-linked (GlcNAc...) asparagine glycosylation is present at N458. An SUEL-type lectin domain is found at 741-827 (DYEKAKVHLQ…KRAVVEAICG (87 aa)).

Belongs to the glycosyl hydrolase 35 family.

The protein resides in the secreted. Its subcellular location is the extracellular space. The protein localises to the apoplast. It catalyses the reaction Hydrolysis of terminal non-reducing beta-D-galactose residues in beta-D-galactosides.. The polypeptide is Beta-galactosidase 2 (Oryza sativa subsp. japonica (Rice)).